A 718-amino-acid polypeptide reads, in one-letter code: LON peptidase N-terminal domain and RING finger protein 3 (718 aa).

The segment at 1–69 (MESLRTEQML…PGTSTPESKV (69 aa)) is disordered. Polar residues predominate over residues 57–66 (EQSPGTSTPE). The stretch at 67 to 100 (SKVLLTQADALASRGRIREALEVYRQLSERQQLV) is one TPR 1 repeat. An RING-type 1 zinc finger spans residues 158-196 (CRKCHGFLSDPVSLSCGHTFCKLCLERGRAADRRCALCG). 2 TPR repeats span residues 243-276 (ASQL…APND) and 278-310 (LLYS…RPMG). Positions 322-413 (SQEEAAARGD…TDQGDKPALS (92 aa)) are disordered. Residues 339–352 (AKVKGDGQQHHMKD) are compositionally biased toward basic and acidic residues. The RING-type 2 zinc finger occupies 426–464 (CALCMRLFYEPVTTPCGHTFCLKCLERCLDHNAKCPLCK). The region spanning 505 to 714 (MEELSNLNKN…GIRRVLAFIS (210 aa)) is the Lon N-terminal domain.

The chain is LON peptidase N-terminal domain and RING finger protein 3 (LONRF3) from Macaca fascicularis (Crab-eating macaque).